The following is a 213-amino-acid chain: Large ribosomal subunit protein bL25 (213 aa).

Positions 191–207 are enriched in low complexity; that stretch reads AEPTDAPTAPAAAPGAE. Positions 191 to 213 are disordered; that stretch reads AEPTDAPTAPAAAPGAEAPKDKA.

The protein belongs to the bacterial ribosomal protein bL25 family. CTC subfamily. Part of the 50S ribosomal subunit; part of the 5S rRNA/L5/L18/L25 subcomplex. Contacts the 5S rRNA. Binds to the 5S rRNA independently of L5 and L18.

This is one of the proteins that binds to the 5S RNA in the ribosome where it forms part of the central protuberance. This is Large ribosomal subunit protein bL25 from Polynucleobacter asymbioticus (strain DSM 18221 / CIP 109841 / QLW-P1DMWA-1) (Polynucleobacter necessarius subsp. asymbioticus).